The primary structure comprises 120 residues: Large ribosomal subunit protein bL12 (120 aa).

The protein belongs to the bacterial ribosomal protein bL12 family. In terms of assembly, homodimer. Part of the ribosomal stalk of the 50S ribosomal subunit. Forms a multimeric L10(L12)X complex, where L10 forms an elongated spine to which 2 to 4 L12 dimers bind in a sequential fashion. Binds GTP-bound translation factors.

Forms part of the ribosomal stalk which helps the ribosome interact with GTP-bound translation factors. Is thus essential for accurate translation. The protein is Large ribosomal subunit protein bL12 of Lactobacillus helveticus (strain DPC 4571).